A 208-amino-acid chain; its full sequence is NAD(P)H dehydrogenase (quinone) (208 aa).

A Flavodoxin-like domain is found at 4–199 (VNVIFHSIHG…AMARYQGRHV (196 aa)). FMN is bound by residues 10–15 (SIHGHT) and 87–89 (TRY). Position 107 (W107) interacts with substrate. FMN-binding positions include 122–128 (SSGTQHG) and H143.

This sequence belongs to the WrbA family. FMN serves as cofactor.

It catalyses the reaction a quinone + NADH + H(+) = a quinol + NAD(+). The enzyme catalyses a quinone + NADPH + H(+) = a quinol + NADP(+). This Methanosarcina barkeri (strain Fusaro / DSM 804) protein is NAD(P)H dehydrogenase (quinone).